The primary structure comprises 333 residues: UDP-N-acetylglucosamine--N-acetylmuramyl-(pentapeptide) pyrophosphoryl-undecaprenol N-acetylglucosamine transferase (333 aa).

Residues 10–12, N124, S177, and Q275 contribute to the UDP-N-acetyl-alpha-D-glucosamine site; that span reads TGG.

This sequence belongs to the glycosyltransferase 28 family. MurG subfamily.

The protein localises to the cell inner membrane. It catalyses the reaction di-trans,octa-cis-undecaprenyl diphospho-N-acetyl-alpha-D-muramoyl-L-alanyl-D-glutamyl-meso-2,6-diaminopimeloyl-D-alanyl-D-alanine + UDP-N-acetyl-alpha-D-glucosamine = di-trans,octa-cis-undecaprenyl diphospho-[N-acetyl-alpha-D-glucosaminyl-(1-&gt;4)]-N-acetyl-alpha-D-muramoyl-L-alanyl-D-glutamyl-meso-2,6-diaminopimeloyl-D-alanyl-D-alanine + UDP + H(+). It participates in cell wall biogenesis; peptidoglycan biosynthesis. In terms of biological role, cell wall formation. Catalyzes the transfer of a GlcNAc subunit on undecaprenyl-pyrophosphoryl-MurNAc-pentapeptide (lipid intermediate I) to form undecaprenyl-pyrophosphoryl-MurNAc-(pentapeptide)GlcNAc (lipid intermediate II). In Nitratiruptor sp. (strain SB155-2), this protein is UDP-N-acetylglucosamine--N-acetylmuramyl-(pentapeptide) pyrophosphoryl-undecaprenol N-acetylglucosamine transferase.